The sequence spans 483 residues: tRNA-2-methylthio-N(6)-dimethylallyladenosine synthase (483 aa).

An MTTase N-terminal domain is found at 31 to 148 (KKLYIETQGC…LPQMLDQHHA (118 aa)). 6 residues coordinate [4Fe-4S] cluster: Cys-40, Cys-77, Cys-111, Cys-192, Cys-196, and Cys-199. Positions 178–410 (RVEGFKAFVS…QQVIKQSSIE (233 aa)) constitute a Radical SAM core domain. One can recognise a TRAM domain in the interval 413–477 (DAMLGKIERV…LNLVYGELLN (65 aa)).

It belongs to the methylthiotransferase family. MiaB subfamily. As to quaternary structure, monomer. Requires [4Fe-4S] cluster as cofactor.

The protein resides in the cytoplasm. The enzyme catalyses N(6)-dimethylallyladenosine(37) in tRNA + (sulfur carrier)-SH + AH2 + 2 S-adenosyl-L-methionine = 2-methylsulfanyl-N(6)-dimethylallyladenosine(37) in tRNA + (sulfur carrier)-H + 5'-deoxyadenosine + L-methionine + A + S-adenosyl-L-homocysteine + 2 H(+). Functionally, catalyzes the methylthiolation of N6-(dimethylallyl)adenosine (i(6)A), leading to the formation of 2-methylthio-N6-(dimethylallyl)adenosine (ms(2)i(6)A) at position 37 in tRNAs that read codons beginning with uridine. The sequence is that of tRNA-2-methylthio-N(6)-dimethylallyladenosine synthase from Acinetobacter baumannii (strain ACICU).